The sequence spans 84 residues: Acyl-CoA-binding protein (84 aa).

One can recognise an ACB domain in the interval Met-1–Ala-84. An acyl-CoA is bound by residues Lys-12, Tyr-27–Lys-31, Lys-53, and Tyr-72.

This sequence belongs to the ACBP family. As to quaternary structure, interacts with dhkA.

Functionally, binds to acyl-CoA. Processed into the SDF-2 (spore differentiation factor 2) a peptide which triggers sporulation. SDF-2 appears to stimulate prestalk cells to release additional SDF-2 by acting through a signal transduction pathway that also involves dhkA, regA and PKA. Induces encapsulation of prespore cells in a dhkA-dependent manner. GABA induces the release of acbA from prespore cells and induces the exposure of tagC on the surface of prestalk cells where it can convert acbA to SDF-2. Glutamate acts as a competitive inhibitor and is also able to inhibit induction of sporulation by SDF-2. The sequence is that of Acyl-CoA-binding protein (acbA) from Dictyostelium discoideum (Social amoeba).